Here is a 425-residue protein sequence, read N- to C-terminus: MVKIYIENYGCARNRADGEIMAALLHLAGHEIVYDPDEGEIVVVNSCAVKDPTERKIARRIKELLDSGKKVIVTGCLPHVNPDVIDERVSGILGVKSIDRIIQAVEYALRGEKLISVPDWRKRNLDKLDFPRLSPRTVYFIVPIAEGCLNACTYCATRFARGVLKSYSPEKIVGWVKWAIKQGYKEIWLSAEDTGCYGFDIGTNLAKLLDEITAIEGEFRVRVGMMNPNHVLKFLDELIEAYQDEKIYKFLHLPVQSGDNDILRRMGRNYTVEEFEEIVKEFRKKFPDLNLHTDIIVGFPGEDDEAFQRSVELIRRIRPDKVNVSRYSPRPGTIAAKWKQLPGWIVKERSRLLHRIRLQISYEINQKYIGKKVEVLIHGEGKKGNVDAVTMNYKHVILPFGNSGEFRIAEIKNATSTYLLGEVMS.

In terms of domain architecture, MTTase N-terminal spans 2 to 110 (VKIYIENYGC…IIQAVEYALR (109 aa)). Positions 11, 47, 76, 148, 152, and 155 each coordinate [4Fe-4S] cluster. The 231-residue stretch at 133–363 (LSPRTVYFIV…HRIRLQISYE (231 aa)) folds into the Radical SAM core domain. The 60-residue stretch at 366–425 (QKYIGKKVEVLIHGEGKKGNVDAVTMNYKHVILPFGNSGEFRIAEIKNATSTYLLGEVMS) folds into the TRAM domain.

The protein belongs to the methylthiotransferase family. CDKAL1 subfamily. It depends on [4Fe-4S] cluster as a cofactor.

It catalyses the reaction N(6)-L-threonylcarbamoyladenosine(37) in tRNA + (sulfur carrier)-SH + AH2 + 2 S-adenosyl-L-methionine = 2-methylsulfanyl-N(6)-L-threonylcarbamoyladenosine(37) in tRNA + (sulfur carrier)-H + 5'-deoxyadenosine + L-methionine + A + S-adenosyl-L-homocysteine + 2 H(+). Its function is as follows. Catalyzes the methylthiolation of N6-threonylcarbamoyladenosine (t(6)A), leading to the formation of 2-methylthio-N6-threonylcarbamoyladenosine (ms(2)t(6)A) at position 37 in tRNAs that read codons beginning with adenine. The protein is Probable threonylcarbamoyladenosine tRNA methylthiotransferase of Pyrococcus abyssi (strain GE5 / Orsay).